We begin with the raw amino-acid sequence, 518 residues long: Retinal dehydrogenase 2 (518 aa).

At tyrosine 168 the chain carries Phosphotyrosine. NAD(+) contacts are provided by residues 184–186, 210–213, and 264–266; these read IPW, KPAE, and STE. Residue glutamate 286 is the Proton acceptor of the active site. Residue cysteine 320 is the Nucleophile of the active site. A Phosphoserine modification is found at serine 351. NAD(+) is bound by residues 366 to 370 and glutamate 417; that span reads KQYNK.

The protein belongs to the aldehyde dehydrogenase family. In terms of assembly, homotetramer.

The protein localises to the cytoplasm. It catalyses the reaction retinal + NAD(+) + H2O = retinoate + NADH + 2 H(+). It carries out the reaction all-trans-retinal + NAD(+) + H2O = all-trans-retinoate + NADH + 2 H(+). The catalysed reaction is all-trans-13,14-dihydroretinal + NAD(+) + H2O = all-trans-13,14-dihydroretinoate + NADH + 2 H(+). Its pathway is cofactor metabolism; retinol metabolism. Functionally, catalyzes the NAD-dependent oxidation of aldehyde substrates, such as all-trans-retinal and all-trans-13,14-dihydroretinal, to their corresponding carboxylic acids, all-trans-retinoate and all-trans-13,14-dihydroretinoate, respectively. Retinoate signaling is critical for the transcriptional control of many genes, for instance it is crucial for initiation of meiosis in both male and female. Recognizes retinal as substrate, both in its free form and when bound to cellular retinol-binding protein. Can metabolize octanal and decanal, but has only very low activity with benzaldehyde, acetaldehyde and propanal. Displays complete lack of activity with citral. This chain is Retinal dehydrogenase 2 (ALDH1A2), found in Homo sapiens (Human).